The following is a 228-amino-acid chain: Ras-related protein Rab-32D (228 aa).

Residue 16–23 coordinates GTP; that stretch reads GDVNVGKT. The Effector region motif lies at 38-46; that stretch reads YKSTIGADF. Residues 64 to 68 and 128 to 131 contribute to the GTP site; these read DTAGQ and NKSD. The segment at 183–228 is disordered; that stretch reads SDNEQFNDSPDEETSSITLLGTSKKHDNTNPNKPSTSSPSSCFNCK. The span at 185-196 shows a compositional bias: acidic residues; sequence NEQFNDSPDEET. A compositionally biased stretch (low complexity) spans 211–228; sequence TNPNKPSTSSPSSCFNCK. Cysteine 224 is lipidated: S-geranylgeranyl cysteine.

Belongs to the small GTPase superfamily. Rab family.

The sequence is that of Ras-related protein Rab-32D (rab32D) from Dictyostelium discoideum (Social amoeba).